The sequence spans 709 residues: Coiled-coil domain-containing protein 13 (709 aa).

3 coiled-coil regions span residues 70 to 97, 139 to 178, and 206 to 288; these read IFEKRVLEDEIQHLRSELRETVDENGRL, ELSKKNRGLMAESESAKVRIKQLTNRIQELEHQLQMASAK, and EVKA…QRQN. A Phosphoserine modification is found at S258. Positions 281 to 312 are disordered; it reads KQLGQRQNKPAGSSSSEVPLSSDSRKMTAQEK. A compositionally biased stretch (low complexity) spans 293-302; that stretch reads SSSSEVPLSS. Residues 323-457 adopt a coiled-coil conformation; the sequence is DKQESWEKLA…ELEIGQLSVQ (135 aa). Disordered stretches follow at residues 462–499, 512–542, and 600–641; these read KGGGEGASPADARFPEDQTPITNSPASAGDHVGRLGSS, SALTRPSLPSPHGTSPRFSDSPEQKGWQAQA, and KMRL…SSTQ. Residues S469 and S532 each carry the phosphoserine modification. A coiled-coil region spans residues 539-604; the sequence is QAQAAEMKAL…EQHLEKMRLE (66 aa).

Interacts with PCM1, CEP290 and PCNT.

The protein localises to the cytoplasm. Its subcellular location is the cytoskeleton. It localises to the microtubule organizing center. The protein resides in the centrosome. It is found in the centriolar satellite. The protein localises to the cilium basal body. Its function is as follows. Required for primary cilia formation and promotes the localization of the ciliopathy protein BBS4 to both centriolar satellites and cilia. The protein is Coiled-coil domain-containing protein 13 of Mus musculus (Mouse).